The following is a 298-amino-acid chain: Osmoprotective compounds uptake permease protein GgtD (298 aa).

Helical transmembrane passes span 26 to 46, 97 to 117, 126 to 146, 158 to 178, 207 to 227, 231 to 251, and 263 to 283; these read IHIA…GLFI, IAVP…YAFA, LLFI…LIPV, TFLG…IYLL, LIVP…FLWV, LLVA…TIQL, and YLLT…FFGL. The region spanning 91–283 is the ABC transmembrane type-1 domain; it reads FLNSLTIAVP…IVPLMVFFGL (193 aa).

It belongs to the binding-protein-dependent transport system permease family. In terms of assembly, the complex is composed of two ATP-binding proteins (GgtA), two transmembrane proteins (GgtC and GgtD) and a solute-binding protein (GgtB).

It is found in the cell membrane. Part of the ABC transporter complex GgtABCD involved in the uptake of the osmoprotective compounds glucosylglycerol (GG), sucrose and trehalose. Responsible for the translocation of the substrate across the membrane. The sequence is that of Osmoprotective compounds uptake permease protein GgtD from Synechocystis sp. (strain ATCC 27184 / PCC 6803 / Kazusa).